The chain runs to 343 residues: Anthranilate phosphoribosyltransferase (343 aa).

5-phospho-alpha-D-ribose 1-diphosphate-binding positions include G84, 87-88 (GD), T92, 94-97 (NIST), 112-120 (KHGNRGVSS), and S124. G84 is an anthranilate binding site. A Mg(2+)-binding site is contributed by S96. Residue N115 participates in anthranilate binding. R170 contacts anthranilate. The Mg(2+) site is built by D229 and E230.

It belongs to the anthranilate phosphoribosyltransferase family. As to quaternary structure, homodimer. The cofactor is Mg(2+).

The enzyme catalyses N-(5-phospho-beta-D-ribosyl)anthranilate + diphosphate = 5-phospho-alpha-D-ribose 1-diphosphate + anthranilate. It participates in amino-acid biosynthesis; L-tryptophan biosynthesis; L-tryptophan from chorismate: step 2/5. Catalyzes the transfer of the phosphoribosyl group of 5-phosphorylribose-1-pyrophosphate (PRPP) to anthranilate to yield N-(5'-phosphoribosyl)-anthranilate (PRA). The polypeptide is Anthranilate phosphoribosyltransferase (Burkholderia cenocepacia (strain ATCC BAA-245 / DSM 16553 / LMG 16656 / NCTC 13227 / J2315 / CF5610) (Burkholderia cepacia (strain J2315))).